We begin with the raw amino-acid sequence, 88 residues long: RQC P-site tRNA stabilizing factor (88 aa).

One can recognise an S4 RNA-binding domain in the interval 1–67 (MRLDKFLKVS…VEITNVKETV (67 aa)).

Belongs to the RqcP family. In terms of assembly, associates with stalled 50S ribosomal subunits. Binds to RqcH, 23S rRNA and the P-site tRNA. Does not require RqcH for association with 50S subunits.

Key component of the ribosome quality control system (RQC), a ribosome-associated complex that mediates the extraction of incompletely synthesized nascent chains from stalled ribosomes and their subsequent degradation. RqcH recruits Ala-charged tRNA, and with RqcP directs the elongation of stalled nascent chains on 50S ribosomal subunits, leading to non-templated C-terminal alanine extensions (Ala tail). The Ala tail promotes nascent chain degradation. RqcP is associated with the translocation-like movement of the peptidyl-tRNA from the A-site into the P-site. This chain is RQC P-site tRNA stabilizing factor, found in Halalkalibacterium halodurans (strain ATCC BAA-125 / DSM 18197 / FERM 7344 / JCM 9153 / C-125) (Bacillus halodurans).